We begin with the raw amino-acid sequence, 252 residues long: Acyl-coenzyme A diphosphatase FITM2 (252 aa).

Residues 1–25 are Cytoplasmic-facing; sequence MAAAVAGSLVDKLVCLWRQPYTRIY. The helical transmembrane segment at 26–46 threads the bilayer; it reads LPHLFFCISLVGSVLKNAELV. Topologically, residues 47–59 are lumenal; sequence PESYFSSSRNVLN. A helical transmembrane segment spans residues 60–80; that stretch reads LYFVKVSWGWTIVLLLPFIAY. The Cytoplasmic portion of the chain corresponds to 81 to 94; that stretch reads SNFYIKSHMFALRR. Residues 95-115 form a helical membrane-spanning segment; that stretch reads LTSLLVATLVWYICTETFFYI. The Lumenal portion of the chain corresponds to 116–156; that stretch reads EDITGSCYESNTMVVIRGEFDTKAACRKAGFFWDGFDISGH. His-156 is an active-site residue. Residues 157–177 form a helical membrane-spanning segment; sequence SFILSYSSLVIMEEMVPMLHI. Topologically, residues 178 to 190 are cytoplasmic; sequence QPAYRNPPLDCLY. The chain crosses the membrane as a helical span at residues 191–211; it reads LALNVIVAIWIWMFGCTSVYF. His-212 is an active-site residue. Residues 212-223 are Lumenal-facing; sequence HDIIDKILGTSC. The chain crosses the membrane as a helical span at residues 224–244; that stretch reads GILGWYMTYKVWYVKLFSPGL. Topologically, residues 245–252 are cytoplasmic; the sequence is PPQPKQHT.

It belongs to the FIT family. FIT2 subfamily. As to expression, widely expressed.

The protein localises to the endoplasmic reticulum membrane. It catalyses the reaction an acyl-CoA + H2O = an acyl-4'-phosphopantetheine + adenosine 3',5'-bisphosphate + 2 H(+). Fatty acyl-coenzyme A (CoA) diphosphatase that hydrolyzes fatty acyl-CoA to yield acyl-4'-phosphopantetheine and adenosine 3',5'-bisphosphate. Preferentially hydrolyzes unsaturated long-chain acyl-CoA substrates in the endoplasmic reticulum (ER) lumen. This catalytic activity is required for maintaining ER structure and for lipid droplets (LDs) biogenesis, which are lipid storage organelles involved in maintaining lipid and energy homeostasis. Required for lipid droplet accumulation in liver and intestine during embryogenesis. May directly bind to diacylglycerol (DAGs) and triacylglycerol, which is also important for LD biogenesis. May support directional budding of nacent LDs from the ER into the cytosol by reducing DAG levels at sites of LD formation. May play a role in the regulation of cell morphology, ER morphology and cytoskeletal organization. The sequence is that of Acyl-coenzyme A diphosphatase FITM2 from Danio rerio (Zebrafish).